Here is a 154-residue protein sequence, read N- to C-terminus: Large ribosomal subunit protein uL13 (154 aa).

It belongs to the universal ribosomal protein uL13 family. Part of the 50S ribosomal subunit.

In terms of biological role, this protein is one of the early assembly proteins of the 50S ribosomal subunit, although it is not seen to bind rRNA by itself. It is important during the early stages of 50S assembly. In Bradyrhizobium diazoefficiens (strain JCM 10833 / BCRC 13528 / IAM 13628 / NBRC 14792 / USDA 110), this protein is Large ribosomal subunit protein uL13.